We begin with the raw amino-acid sequence, 186 residues long: MITLGVDPGSIVTGYGVIGKSEAGFRVFDYSAIRPGGKCDFPQRIKYIYDTLEKVICAYKPTQLSLETAFYGKNAQSALKLGQVRGAIIILAMNYNLKFVEYSPREVKKSVAGTGNASKEQVAYMVKKMLSIDDEKMALDTSDALAIALCGHFKSASMAASEFKKQSRKATSWGEYILQNPQVVVK.

Active-site residues include Asp-7, Glu-67, and Asp-140. Residues Asp-7, Glu-67, and Asp-140 each contribute to the Mg(2+) site.

The protein belongs to the RuvC family. Homodimer which binds Holliday junction (HJ) DNA. The HJ becomes 2-fold symmetrical on binding to RuvC with unstacked arms; it has a different conformation from HJ DNA in complex with RuvA. In the full resolvosome a probable DNA-RuvA(4)-RuvB(12)-RuvC(2) complex forms which resolves the HJ. The cofactor is Mg(2+).

The protein resides in the cytoplasm. It catalyses the reaction Endonucleolytic cleavage at a junction such as a reciprocal single-stranded crossover between two homologous DNA duplexes (Holliday junction).. The RuvA-RuvB-RuvC complex processes Holliday junction (HJ) DNA during genetic recombination and DNA repair. Endonuclease that resolves HJ intermediates. Cleaves cruciform DNA by making single-stranded nicks across the HJ at symmetrical positions within the homologous arms, yielding a 5'-phosphate and a 3'-hydroxyl group; requires a central core of homology in the junction. The consensus cleavage sequence is 5'-(A/T)TT(C/G)-3'. Cleavage occurs on the 3'-side of the TT dinucleotide at the point of strand exchange. HJ branch migration catalyzed by RuvA-RuvB allows RuvC to scan DNA until it finds its consensus sequence, where it cleaves and resolves the cruciform DNA. This chain is Crossover junction endodeoxyribonuclease RuvC, found in Chloroherpeton thalassium (strain ATCC 35110 / GB-78).